Consider the following 142-residue polypeptide: Ribosome-binding factor A (142 aa).

The tract at residues 123-142 (VQRDLDSAPEDDEPETGTGH) is disordered. The span at 129 to 142 (SAPEDDEPETGTGH) shows a compositional bias: acidic residues.

Belongs to the RbfA family. As to quaternary structure, monomer. Binds 30S ribosomal subunits, but not 50S ribosomal subunits or 70S ribosomes.

Its subcellular location is the cytoplasm. One of several proteins that assist in the late maturation steps of the functional core of the 30S ribosomal subunit. Associates with free 30S ribosomal subunits (but not with 30S subunits that are part of 70S ribosomes or polysomes). Required for efficient processing of 16S rRNA. May interact with the 5'-terminal helix region of 16S rRNA. This chain is Ribosome-binding factor A, found in Methylobacterium radiotolerans (strain ATCC 27329 / DSM 1819 / JCM 2831 / NBRC 15690 / NCIMB 10815 / 0-1).